Here is a 78-residue protein sequence, read N- to C-terminus: Antitoxin FitA (78 aa).

In terms of assembly, homodimer in the absence of FitB; forms a heterodimer with FitB; 4 FitAB heterodimers form a complex that binds to fitAB promoter DNA. The complex is also seen in solution.

In terms of biological role, antitoxin component of a type II toxin-antitoxin (TA) system. Plays a role in the speed with which bacteria traverse human epithelial cells; disruption of the locus increases the speed of trafficking about 2-4-fold. Binds to its own promoter, binding affinity of the FitAB complex is 20-30-fold higher than FitA alone. No nuclease activity was observed for the FitAB complex, perhaps because FitA (the antitoxin) prevents metal binding and thus catalysis by FitB. The polypeptide is Antitoxin FitA (fitA) (Neisseria gonorrhoeae (strain ATCC 700825 / FA 1090)).